Consider the following 121-residue polypeptide: MAFDKDAIIASLKEASISDLNDLVKAIEEEFDVSAAAPVAVAGAAGGEAAAKDSFTVELTSAGSAKVKVIKVVKDITGLGLKDAKALVDGAPSNVKEDVKEDEANDIKAKLEEVGASVTLK.

Belongs to the bacterial ribosomal protein bL12 family. As to quaternary structure, homodimer. Part of the ribosomal stalk of the 50S ribosomal subunit. Forms a multimeric L10(L12)X complex, where L10 forms an elongated spine to which 2 to 4 L12 dimers bind in a sequential fashion. Binds GTP-bound translation factors.

In terms of biological role, forms part of the ribosomal stalk which helps the ribosome interact with GTP-bound translation factors. Is thus essential for accurate translation. In Limosilactobacillus fermentum (strain NBRC 3956 / LMG 18251) (Lactobacillus fermentum), this protein is Large ribosomal subunit protein bL12.